Consider the following 351-residue polypeptide: Tropomodulin-2 (351 aa).

Serine 25 is modified (phosphoserine).

It belongs to the tropomodulin family. As to quaternary structure, binds to the N-terminus of tropomyosin and to actin. In terms of tissue distribution, neuronal-tissue specific.

The protein localises to the cytoplasm. Its subcellular location is the cytoskeleton. In terms of biological role, blocks the elongation and depolymerization of the actin filaments at the pointed end. The Tmod/TM complex contributes to the formation of the short actin protofilament, which in turn defines the geometry of the membrane skeleton. This chain is Tropomodulin-2 (Tmod2), found in Mus musculus (Mouse).